Reading from the N-terminus, the 337-residue chain is Holliday junction branch migration complex subunit RuvB (337 aa).

Residues 1–182 (MSEEKSVLRD…FGAVFRLSYY (182 aa)) form a large ATPase domain (RuvB-L) region. ATP is bound by residues Leu21, Arg22, Gly63, Lys66, Thr67, Thr68, 129-131 (EDY), Arg172, Tyr182, and Arg219. Thr67 contacts Mg(2+). Residues 183–253 (KLEEIKQIVR…ITQLALTKLG (71 aa)) form a small ATPAse domain (RuvB-S) region. The interval 256–337 (HKGLDASDYL…VKYYKGLLDN (82 aa)) is head domain (RuvB-H). 2 residues coordinate DNA: Arg311 and Arg316.

It belongs to the RuvB family. In terms of assembly, homohexamer. Forms an RuvA(8)-RuvB(12)-Holliday junction (HJ) complex. HJ DNA is sandwiched between 2 RuvA tetramers; dsDNA enters through RuvA and exits via RuvB. An RuvB hexamer assembles on each DNA strand where it exits the tetramer. Each RuvB hexamer is contacted by two RuvA subunits (via domain III) on 2 adjacent RuvB subunits; this complex drives branch migration. In the full resolvosome a probable DNA-RuvA(4)-RuvB(12)-RuvC(2) complex forms which resolves the HJ.

Its subcellular location is the cytoplasm. The catalysed reaction is ATP + H2O = ADP + phosphate + H(+). The RuvA-RuvB-RuvC complex processes Holliday junction (HJ) DNA during genetic recombination and DNA repair, while the RuvA-RuvB complex plays an important role in the rescue of blocked DNA replication forks via replication fork reversal (RFR). RuvA specifically binds to HJ cruciform DNA, conferring on it an open structure. The RuvB hexamer acts as an ATP-dependent pump, pulling dsDNA into and through the RuvAB complex. RuvB forms 2 homohexamers on either side of HJ DNA bound by 1 or 2 RuvA tetramers; 4 subunits per hexamer contact DNA at a time. Coordinated motions by a converter formed by DNA-disengaged RuvB subunits stimulates ATP hydrolysis and nucleotide exchange. Immobilization of the converter enables RuvB to convert the ATP-contained energy into a lever motion, pulling 2 nucleotides of DNA out of the RuvA tetramer per ATP hydrolyzed, thus driving DNA branch migration. The RuvB motors rotate together with the DNA substrate, which together with the progressing nucleotide cycle form the mechanistic basis for DNA recombination by continuous HJ branch migration. Branch migration allows RuvC to scan DNA until it finds its consensus sequence, where it cleaves and resolves cruciform DNA. In Acholeplasma laidlawii (strain PG-8A), this protein is Holliday junction branch migration complex subunit RuvB.